A 335-amino-acid polypeptide reads, in one-letter code: Fructose-1,6-bisphosphatase class 1 (335 aa).

Residues Glu-89, Asp-112, Leu-114, and Asp-115 each contribute to the Mg(2+) site. Residues 115–118 (DGSS), Asn-208, Tyr-241, and Lys-271 each bind substrate. Position 277 (Glu-277) interacts with Mg(2+).

This sequence belongs to the FBPase class 1 family. As to quaternary structure, homotetramer. Requires Mg(2+) as cofactor.

The protein localises to the cytoplasm. It carries out the reaction beta-D-fructose 1,6-bisphosphate + H2O = beta-D-fructose 6-phosphate + phosphate. It participates in carbohydrate biosynthesis; gluconeogenesis. The sequence is that of Fructose-1,6-bisphosphatase class 1 from Proteus mirabilis (strain HI4320).